The following is a 378-amino-acid chain: Chaperone protein DnaJ (378 aa).

Positions 6–70 (DYYDVLGVSR…QKRQQYDQFG (65 aa)) constitute a J domain. The CR-type zinc-finger motif lies at 137–219 (GKTSEISYSR…CHGKGVKTQK (83 aa)). Residues cysteine 150, cysteine 153, cysteine 167, cysteine 170, cysteine 193, cysteine 196, cysteine 207, and cysteine 210 each coordinate Zn(2+). 4 CXXCXGXG motif repeats span residues 150–157 (CEVCKGSG), 167–174 (CDKCGGSG), 193–200 (CDKCAGSG), and 207–214 (CHNCHGKG).

It belongs to the DnaJ family. As to quaternary structure, homodimer. Zn(2+) is required as a cofactor.

It is found in the cytoplasm. In terms of biological role, participates actively in the response to hyperosmotic and heat shock by preventing the aggregation of stress-denatured proteins and by disaggregating proteins, also in an autonomous, DnaK-independent fashion. Unfolded proteins bind initially to DnaJ; upon interaction with the DnaJ-bound protein, DnaK hydrolyzes its bound ATP, resulting in the formation of a stable complex. GrpE releases ADP from DnaK; ATP binding to DnaK triggers the release of the substrate protein, thus completing the reaction cycle. Several rounds of ATP-dependent interactions between DnaJ, DnaK and GrpE are required for fully efficient folding. Also involved, together with DnaK and GrpE, in the DNA replication of plasmids through activation of initiation proteins. The protein is Chaperone protein DnaJ of Lactobacillus delbrueckii subsp. bulgaricus (strain ATCC BAA-365 / Lb-18).